Consider the following 191-residue polypeptide: Adenylate kinase (191 aa).

12–17 contacts ATP; the sequence is GSGKTT. The segment at 33-62 is NMP; sequence STGDLLRAEVASGSELGKLIDSFISKGNLV. Residues Thr-34, Arg-39, 60–62, 87–90, and Gln-94 each bind AMP; these read NLV and GYPR. An LID region spans residues 129–135; it reads GRARGAD. Arg-130 is an ATP binding site. 2 residues coordinate AMP: Arg-132 and Arg-144. Residue Arg-172 participates in ATP binding.

It belongs to the adenylate kinase family. Monomer.

The protein localises to the cytoplasm. The enzyme catalyses AMP + ATP = 2 ADP. The protein operates within purine metabolism; AMP biosynthesis via salvage pathway; AMP from ADP: step 1/1. Its function is as follows. Catalyzes the reversible transfer of the terminal phosphate group between ATP and AMP. Plays an important role in cellular energy homeostasis and in adenine nucleotide metabolism. The chain is Adenylate kinase from Campylobacter fetus subsp. fetus (strain 82-40).